We begin with the raw amino-acid sequence, 180 residues long: ATP-dependent protease subunit HslV (180 aa).

Thr9 is a catalytic residue. 3 residues coordinate Na(+): Ala164, Cys167, and Thr170.

It belongs to the peptidase T1B family. HslV subfamily. In terms of assembly, a double ring-shaped homohexamer of HslV is capped on each side by a ring-shaped HslU homohexamer. The assembly of the HslU/HslV complex is dependent on binding of ATP.

The protein resides in the cytoplasm. The catalysed reaction is ATP-dependent cleavage of peptide bonds with broad specificity.. Its activity is regulated as follows. Allosterically activated by HslU binding. In terms of biological role, protease subunit of a proteasome-like degradation complex believed to be a general protein degrading machinery. In Leptospira borgpetersenii serovar Hardjo-bovis (strain JB197), this protein is ATP-dependent protease subunit HslV.